A 380-amino-acid chain; its full sequence is Gap junction gamma-1 protein (380 aa).

Residues 1-22 (MSWSFLTRLLDEISNHSTFVGK) are Cytoplasmic-facing. A helical transmembrane segment spans residues 23 to 45 (IWLTLFIIFRIVLTVVGGESIYY). The Extracellular segment spans residues 46 to 75 (DEQSKFVCNTQQPGCENVCYDAFAPLSHVR). A helical transmembrane segment spans residues 76-95 (FWVFQIILITTPTIMYLGFA). The Cytoplasmic portion of the chain corresponds to 96–171 (MHKIARSNDV…RRIKRDGLMK (76 aa)). Residues 172-194 (VYILQLLSRIIFEVGFLFGQYIL) traverse the membrane as a helical segment. At 195–228 (YGFEVAPSYVCTRSPCPHTVDCFVSRPTEKTIFL) the chain is on the extracellular side. Residues 229 to 251 (LIMYAVSCLCLSLTVLEILHLGL) form a helical membrane-spanning segment. Residues 252–380 (SGIRDAFRRR…GSKCEKGIHA (129 aa)) lie on the Cytoplasmic side of the membrane. Residues 337–380 (AYQNGESSPSRSSSPESNGTAVEQNRLNFAQEKQGSKCEKGIHA) form a disordered region. Positions 342 to 353 (ESSPSRSSSPES) are enriched in low complexity. Polar residues predominate over residues 354-369 (NGTAVEQNRLNFAQEK). Residues 370-380 (QGSKCEKGIHA) are compositionally biased toward basic and acidic residues.

The protein belongs to the connexin family. Gamma-type subfamily. As to quaternary structure, a connexon is composed of a hexamer of connexins.

It is found in the cell membrane. The protein resides in the cell junction. The protein localises to the gap junction. Its function is as follows. One gap junction consists of a cluster of closely packed pairs of transmembrane channels, the connexons, through which materials of low MW diffuse from one cell to a neighboring cell. Participates in a developmental pathway for formation of the notochord and tail. The chain is Gap junction gamma-1 protein (gjc1) from Danio rerio (Zebrafish).